A 299-amino-acid polypeptide reads, in one-letter code: uncharacterized protein (299 aa).

The helical transmembrane segment at 4-20 threads the bilayer; it reads LFFIFVMLIVLLCGCTS.

The protein localises to the membrane. This is an uncharacterized protein from Methanocaldococcus jannaschii (strain ATCC 43067 / DSM 2661 / JAL-1 / JCM 10045 / NBRC 100440) (Methanococcus jannaschii).